We begin with the raw amino-acid sequence, 1002 residues long: Chitin synthase II (1002 aa).

Disordered stretches follow at residues 1–165 (MDRP…GRTS) and 178–209 (LDGSDDVFGPETDLSDSRPLPTHRDSFMSGSQ). A compositionally biased stretch (low complexity) spans 63–78 (SYQPSVVSSHSRSASV). Residue Asn123 is glycosylated (N-linked (GlcNAc...) asparagine). Asn336 is a glycosylation site (N-linked (GlcNAc...) asparagine). The next 8 helical transmembrane spans lie at 627-647 (WLNGAFFAAVYSLVQFRQILA), 669-689 (LLFTYFSLANFYLTFYFVAGG), 704-724 (SVIFTILRYTCVLLIATQFIL), 740-760 (SMIIYGVIMTYTSFACIYIVV), 780-800 (LIVSMASTIGLYFVMSFLYLE), 808-828 (SLQYFLLLPSYICTLQVYAFC), 906-926 (YMVVTWMIANGILAMAVSEIY), and 940-960 (ILWAVASLAIFRALGSTTFAI).

It belongs to the chitin synthase family. Class II subfamily. As to expression, expressed in hyphal bodies.

The protein localises to the cell membrane. It catalyses the reaction [(1-&gt;4)-N-acetyl-beta-D-glucosaminyl](n) + UDP-N-acetyl-alpha-D-glucosamine = [(1-&gt;4)-N-acetyl-beta-D-glucosaminyl](n+1) + UDP + H(+). Functionally, polymerizes chitin, a structural polymer of the cell wall and septum, by transferring the sugar moiety of UDP-GlcNAc to the non-reducing end of the growing chitin polymer. Contributes to the production of conidia and the ability of fungal conidia to germinate. Involved in fungal stress tolerances. In Metarhizium acridum (strain CQMa 102), this protein is Chitin synthase II.